The chain runs to 207 residues: Thymidylate kinase (207 aa).

7-14 (GCEGTGKT) serves as a coordination point for ATP.

This sequence belongs to the thymidylate kinase family.

It catalyses the reaction dTMP + ATP = dTDP + ADP. Functionally, phosphorylation of dTMP to form dTDP in both de novo and salvage pathways of dTTP synthesis. The protein is Thymidylate kinase of Onion yellows phytoplasma (strain OY-M).